Reading from the N-terminus, the 1158-residue chain is cGMP-specific 3',5'-cyclic phosphodiesterase (1158 aa).

Disordered regions lie at residues 1 to 137 (MTDV…SQHD) and 195 to 216 (SPTV…SIPE). Residues 30–71 (ATTSAAASASSSQAKPLTNGAKKAATAAAAAGAEEGGASASN) show a composition bias toward low complexity. The segment covering 108–135 (GSTSKSSSIHTQTSQQERAGRPTSSASQ) has biased composition (polar residues). Over residues 202-215 (SPRSLSNSSASSIP) the composition is skewed to low complexity. 2 GAF domains span residues 242-394 (DIDV…GIGI) and 426-640 (NLEC…GLGI). Residues 670–993 (SQDQTEKLTQ…RNWQDLAEKV (324 aa)) form the PDEase domain. His746 functions as the Proton donor in the catalytic mechanism. Residues His750, His786, Asp787, and Asp897 each contribute to the a divalent metal cation site. Disordered stretches follow at residues 1034-1065 (QSQQ…TGAL) and 1097-1158 (VSED…CALL). A compositionally biased stretch (basic and acidic residues) spans 1041-1052 (GSEDSHTPEHQR). The span at 1114 to 1130 (AAGSMGRMSASSSTSSA) shows a compositional bias: low complexity. Residues 1148–1158 (SKKRSKLCALL) show a composition bias toward basic residues. Cys1155 bears the Cysteine methyl ester mark. A lipid anchor (S-farnesyl cysteine) is attached at Cys1155. A propeptide spans 1156 to 1158 (ALL) (removed in mature form).

This sequence belongs to the cyclic nucleotide phosphodiesterase family. As to quaternary structure, interacts with PrBP. Requires a divalent metal cation as cofactor.

It is found in the cell membrane. The enzyme catalyses 3',5'-cyclic GMP + H2O = GMP + H(+). Has a role regulating cGMP transport in Malpighian tubule principal cells. The protein is cGMP-specific 3',5'-cyclic phosphodiesterase of Drosophila ananassae (Fruit fly).